The sequence spans 144 residues: Short-chain diamines transporter (144 aa).

4 helical membrane-spanning segments follow: residues 9–29, 35–55, 76–96, and 103–123; these read IHAI…LSFI, EVTG…NMIF, ILHA…MIAY, and IDAF…TFIF.

Belongs to the proteobacterial antimicrobial compound efflux (PACE) (TC 2.A.117) family. As to quaternary structure, exists in a monomer-homodimer equilibrium. The dimer is probably the functional form of the protein, and the assembly of the dimer is mediated by binding of chlorhexidine and promoted by high pH conditions.

The protein resides in the cell inner membrane. Its activity is regulated as follows. Protonation/deprotonation of Glu-15 may play an important role in transporter function. Cadaverin transport is inhibited in the presence of CCCP. Mediates the efflux of short-chain diamines when energized by an electrochemical gradient. Recognizes specifically the short-chain diamines cadaverine and putrescine as substrates, and promotes the active transport of these substrates in exchange for a cation. Protons are probably the primary source of energy for transport, however it was not possible to conclude with complete certainty that protons, rather than alternative cations such as Na(+) ions, are exchanged for substrates by AceI. In addition, is involved in resistance to the synthetic biocide chlorhexidine, a widely used antiseptic and disinfectant in both hospital and community settings. Interacts directly with chlorhexidine and mediates its efflux via an energy-dependent mechanism. The sequence is that of Short-chain diamines transporter from Acinetobacter baumannii (strain ATCC 17978 / DSM 105126 / CIP 53.77 / LMG 1025 / NCDC KC755 / 5377).